We begin with the raw amino-acid sequence, 87 residues long: Putative defensin-like protein 231 (87 aa).

An N-terminal signal peptide occupies residues 1-26; that stretch reads MKFATCFLVSYVLVFLVLSVCKEVEA. Intrachain disulfides connect cysteine 30–cysteine 85, cysteine 40–cysteine 66, cysteine 48–cysteine 79, and cysteine 64–cysteine 81.

Belongs to the DEFL family.

It localises to the secreted. In Arabidopsis thaliana (Mouse-ear cress), this protein is Putative defensin-like protein 231 (SCRL25).